A 426-amino-acid chain; its full sequence is 3-phosphoshikimate 1-carboxyvinyltransferase (426 aa).

3-phosphoshikimate-binding residues include Lys-22, Ser-23, and Arg-27. Lys-22 contacts phosphoenolpyruvate. Residues Gly-96 and Arg-124 each coordinate phosphoenolpyruvate. The 3-phosphoshikimate site is built by Ser-170, Ser-171, Gln-172, Ser-198, Asp-314, Asn-337, and Lys-341. A phosphoenolpyruvate-binding site is contributed by Gln-172. Asp-314 functions as the Proton acceptor in the catalytic mechanism. Positions 345, 387, and 412 each coordinate phosphoenolpyruvate.

This sequence belongs to the EPSP synthase family. In terms of assembly, monomer.

It is found in the cytoplasm. It carries out the reaction 3-phosphoshikimate + phosphoenolpyruvate = 5-O-(1-carboxyvinyl)-3-phosphoshikimate + phosphate. It participates in metabolic intermediate biosynthesis; chorismate biosynthesis; chorismate from D-erythrose 4-phosphate and phosphoenolpyruvate: step 6/7. Catalyzes the transfer of the enolpyruvyl moiety of phosphoenolpyruvate (PEP) to the 5-hydroxyl of shikimate-3-phosphate (S3P) to produce enolpyruvyl shikimate-3-phosphate and inorganic phosphate. This Shewanella sp. (strain ANA-3) protein is 3-phosphoshikimate 1-carboxyvinyltransferase.